A 215-amino-acid chain; its full sequence is Thiamine-phosphate synthase (215 aa).

Residues 37–41 and Asn69 each bind 4-amino-2-methyl-5-(diphosphooxymethyl)pyrimidine; that span reads QLRIK. Mg(2+) is bound by residues Asp70 and Asp89. A 4-amino-2-methyl-5-(diphosphooxymethyl)pyrimidine-binding site is contributed by Ser108. A 2-[(2R,5Z)-2-carboxy-4-methylthiazol-5(2H)-ylidene]ethyl phosphate-binding site is contributed by 134–136; the sequence is TQT. Lys137 provides a ligand contact to 4-amino-2-methyl-5-(diphosphooxymethyl)pyrimidine. Residues Gly166 and 186–187 contribute to the 2-[(2R,5Z)-2-carboxy-4-methylthiazol-5(2H)-ylidene]ethyl phosphate site; that span reads VS.

The protein belongs to the thiamine-phosphate synthase family. Mg(2+) serves as cofactor.

It carries out the reaction 2-[(2R,5Z)-2-carboxy-4-methylthiazol-5(2H)-ylidene]ethyl phosphate + 4-amino-2-methyl-5-(diphosphooxymethyl)pyrimidine + 2 H(+) = thiamine phosphate + CO2 + diphosphate. The catalysed reaction is 2-(2-carboxy-4-methylthiazol-5-yl)ethyl phosphate + 4-amino-2-methyl-5-(diphosphooxymethyl)pyrimidine + 2 H(+) = thiamine phosphate + CO2 + diphosphate. It catalyses the reaction 4-methyl-5-(2-phosphooxyethyl)-thiazole + 4-amino-2-methyl-5-(diphosphooxymethyl)pyrimidine + H(+) = thiamine phosphate + diphosphate. It participates in cofactor biosynthesis; thiamine diphosphate biosynthesis; thiamine phosphate from 4-amino-2-methyl-5-diphosphomethylpyrimidine and 4-methyl-5-(2-phosphoethyl)-thiazole: step 1/1. Condenses 4-methyl-5-(beta-hydroxyethyl)thiazole monophosphate (THZ-P) and 2-methyl-4-amino-5-hydroxymethyl pyrimidine pyrophosphate (HMP-PP) to form thiamine monophosphate (TMP). The sequence is that of Thiamine-phosphate synthase from Yersinia pestis (strain Pestoides F).